Here is a 350-residue protein sequence, read N- to C-terminus: Transmembrane protein 115 (350 aa).

At 1-19 the chain is on the cytoplasmic side; that stretch reads MQRALPGARQHLGAILASA. Positions 1–205 are mediates homooligomerization; it reads MQRALPGARQ…FGLLSSWVYL (205 aa). The helical transmembrane segment at 20 to 40 threads the bilayer; it reads SVVVKALCAVVLFLYLLSFAV. The Lumenal portion of the chain corresponds to 41 to 97; that stretch reads DTGCLAVTPGYLFPPNFWIWTLATHGLMEQHVWDVAISLATVVVAGRLLEPLWGALE. The helical transmembrane segment at 98 to 118 threads the bilayer; it reads LLIFFSVVNVSVGLLGALAYL. Topologically, residues 119–126 are cytoplasmic; sequence LTYMASFN. A helical transmembrane segment spans residues 127-147; that stretch reads LVYLFTIRIHGALGFLGGVLV. Over 148 to 165 the chain is Lumenal; the sequence is ALKQTMGDCVVLRVPQVR. A helical membrane pass occupies residues 166–186; that stretch reads VSVVPMLLLALLLLLRLATLL. Topologically, residues 187–350 are cytoplasmic; it reads QSPALASYGF…LITLETAPLL (164 aa). A mediates localization to the Golgi region spans residues 206 to 229; the sequence is RFYQRHSRGRGDMADHFAFATFFP. Residues 299-350 form a disordered region; sequence EDQSAWPSMDDDEEEAGAKTDSPLPLEEASTPPGKVTVPESSLITLETAPLL. Phosphothreonine is present on threonine 329.

Belongs to the TMEM115 family. As to quaternary structure, homooligomer. Interacts with COPB1. May interact with LMAN1. Interacts with the COG complex; probably through COG3.

It is found in the golgi apparatus. Its subcellular location is the golgi stack membrane. In terms of biological role, may play a role in retrograde transport of proteins from the Golgi to the endoplasmic reticulum. May indirectly play a role in protein glycosylation in the Golgi. The chain is Transmembrane protein 115 from Mus musculus (Mouse).